A 346-amino-acid chain; its full sequence is Small ribosomal subunit biogenesis GTPase RsgA (346 aa).

Residues 1–26 form a disordered region; it reads MAKRKLTQNQTRRIQSNNAKTLHRHK. The segment covering 7–20 has biased composition (polar residues); the sequence is TQNQTRRIQSNNAK. One can recognise a CP-type G domain in the interval 103 to 271; it reads ENEISRPDYY…LIDSPGIREF (169 aa). Residues 159-162 and 213-221 each bind GTP; these read NKVD and GQSGVGKSS. Zn(2+) is bound by residues Cys-295, Cys-300, His-302, and Cys-308.

This sequence belongs to the TRAFAC class YlqF/YawG GTPase family. RsgA subfamily. As to quaternary structure, monomer. Associates with 30S ribosomal subunit, binds 16S rRNA. It depends on Zn(2+) as a cofactor.

The protein resides in the cytoplasm. One of several proteins that assist in the late maturation steps of the functional core of the 30S ribosomal subunit. Helps release RbfA from mature subunits. May play a role in the assembly of ribosomal proteins into the subunit. Circularly permuted GTPase that catalyzes slow GTP hydrolysis, GTPase activity is stimulated by the 30S ribosomal subunit. This is Small ribosomal subunit biogenesis GTPase RsgA from Haemophilus influenzae (strain PittEE).